The primary structure comprises 120 residues: Large ribosomal subunit protein bL20c (120 aa).

This sequence belongs to the bacterial ribosomal protein bL20 family.

The protein localises to the plastid. Functionally, binds directly to 23S ribosomal RNA and is necessary for the in vitro assembly process of the 50S ribosomal subunit. It is not involved in the protein synthesizing functions of that subunit. In Cuscuta obtusiflora (Peruvian dodder), this protein is Large ribosomal subunit protein bL20c.